A 232-amino-acid polypeptide reads, in one-letter code: UPF0235 protein At5g63440 (232 aa).

The protein belongs to the UPF0235 family. Interacts with CTN.

The protein resides in the nucleus speckle. Its function is as follows. May play a role during early embryonic development. Probably involved in pre-mRNA splicing. In Arabidopsis thaliana (Mouse-ear cress), this protein is UPF0235 protein At5g63440.